Here is a 663-residue protein sequence, read N- to C-terminus: Bicarbonate transport ATP-binding protein CmpC (663 aa).

One can recognise an ABC transporter domain in the interval 5–239 (VAVENIEKSF…RPRKRMDVVH (235 aa)). 42–49 (GHSGCGKS) lines the ATP pocket. The cmpA-like stretch occupies residues 281–663 (LEIGYVPLMA…LDQPRPIAAA (383 aa)).

Belongs to the ABC transporter superfamily. Nitrate/nitrite/cyanate uptake transporter (NitT) (TC 3.A.1.16) family. In terms of assembly, the complex is composed of two ATP-binding proteins (CmpC and CmpD), a transmembrane protein (CmpB) and a solute-binding protein (CmpA).

It is found in the cell inner membrane. Part of the ABC transporter complex CmpABCD involved in bicarbonate transport. Responsible for energy coupling to the transport system. In Synechococcus elongatus (strain ATCC 33912 / PCC 7942 / FACHB-805) (Anacystis nidulans R2), this protein is Bicarbonate transport ATP-binding protein CmpC (cmpC).